The following is a 731-amino-acid chain: Gene 24 protein (731 aa).

This sequence belongs to the herpesviridae UL87 family.

The polypeptide is Gene 24 protein (24) (Saimiri sciureus (Common squirrel monkey)).